The chain runs to 1302 residues: Regulator of telomere elongation helicase 1 (1302 aa).

Positions 7–297 constitute a Helicase ATP-binding domain; that stretch reads NGVTVDFPFQ…TKTAQQGEPH (291 aa). Residue 42–49 participates in ATP binding; sequence SHTGTGKT. Residues Cys146, Cys164, Cys173, and Cys208 each contribute to the [4Fe-4S] cluster site. The Nuclear localization signal motif lies at 152-168; sequence KKQESNHIQIHLCRKKV. The DEAH box motif lies at 251–254; that stretch reads DEAH. A compositionally biased stretch (low complexity) spans 758–767; it reads PAPAPRATAP. The segment at 758–819 is disordered; sequence PAPAPRATAP…AAGDPESSLC (62 aa). Positions 770-780 are enriched in basic and acidic residues; the sequence is REGEDAVREVK. The Nuclear localization signal signature appears at 873-879; that stretch reads PRGGRKK. Disordered stretches follow at residues 981–1006, 1019–1058, 1134–1153, and 1160–1234; these read RPEHSIPRRQPAQPVLDPTGRTAPDP, DPREHLNQGRPHLSPRPPPTGDPGSHPQWRSGVPRAGKQG, CTDLTGRPYPGMERPGPQEE, and VLTH…QAAG. Over residues 1178–1187 the composition is skewed to polar residues; the sequence is KTQSKISSLL. The PIP-box signature appears at 1180 to 1187; it reads QSKISSLL.

Belongs to the helicase family. RAD3/XPD subfamily. As to quaternary structure, interacts with TERF1. Interacts (via PIP-box) with PCNA; the interaction is direct and essential for suppressing telomere fragility. Interacts with MMS19; the interaction mediates the association of RTEL1 with the cytosolic iron-sulfur protein assembly (CIA) complex.

The protein localises to the nucleus. The catalysed reaction is ATP + H2O = ADP + phosphate + H(+). In terms of biological role, a probable ATP-dependent DNA helicase implicated in telomere-length regulation, DNA repair and the maintenance of genomic stability. Acts as an anti-recombinase to counteract toxic recombination and limit crossover during meiosis. Regulates meiotic recombination and crossover homeostasis by physically dissociating strand invasion events and thereby promotes noncrossover repair by meiotic synthesis dependent strand annealing (SDSA) as well as disassembly of D loop recombination intermediates. Also disassembles T loops and prevents telomere fragility by counteracting telomeric G4-DNA structures, which together ensure the dynamics and stability of the telomere. In Pongo abelii (Sumatran orangutan), this protein is Regulator of telomere elongation helicase 1.